We begin with the raw amino-acid sequence, 240 residues long: Enoyl-CoA delta isomerase 1, peroxisomal (240 aa).

Residues 238–240 (SKL) carry the Microbody targeting signal motif.

Belongs to the enoyl-CoA hydratase/isomerase family.

It is found in the peroxisome. The enzyme catalyses a (3Z)-enoyl-CoA = a 4-saturated (2E)-enoyl-CoA. The catalysed reaction is a (3E)-enoyl-CoA = a 4-saturated (2E)-enoyl-CoA. Its pathway is lipid metabolism; fatty acid beta-oxidation. In terms of biological role, able to isomerize both 3-cis and 3-trans double bonds into the 2-trans form in a range of enoyl-CoA species. Essential for the beta oxidation of unsaturated fatty acids. The protein is Enoyl-CoA delta isomerase 1, peroxisomal of Arabidopsis thaliana (Mouse-ear cress).